A 281-amino-acid chain; its full sequence is Translation initiation factor IF3-4, chloroplastic (281 aa).

A chloroplast-targeting transit peptide spans 1–51 (MAGITSTVGFNAILAGATKTVSHPVKSKLFGLRLCVPEFSIVSLSPYHHRR). Disordered regions lie at residues 63–86 (GGGG…DDSL) and 253–281 (KVQE…TQDI). Basic and acidic residues-rich tracts occupy residues 70–79 (PGDRRGRQKE) and 253–270 (KVQE…DDKV).

It belongs to the IF-3 family. In terms of assembly, monomer.

It localises to the plastid. Its subcellular location is the chloroplast. Functionally, chloroplast translation initiation factor that is essential for the coordination of leaf and chloroplast development. IF-3 binds to the 30S ribosomal subunit and shifts the equilibrium between 70S ribosomes and their 50S and 30S subunits in favor of the free subunits, thus enhancing the availability of 30S subunits on which protein synthesis initiation begins. The chain is Translation initiation factor IF3-4, chloroplastic from Arabidopsis thaliana (Mouse-ear cress).